Here is an 800-residue protein sequence, read N- to C-terminus: DEP domain-containing protein 1A (800 aa).

The region spanning 24–108 is the DEP domain; the sequence is FRAGMPLKKH…DNSQLYRFPS (85 aa). 3 disordered regions span residues 147 to 173, 306 to 326, and 459 to 485; these read ETLE…RSRE, SQPG…AKNP, and INTS…ARAR. The region spanning 281 to 321 is the Rho-GAP domain; the sequence is PLLTYQYYELFVNILVMCGYITTPKSQPGKRKNQEEPNCPQ. A compositionally biased stretch (low complexity) spans 459 to 468; sequence INTSGSSVSS.

The sequence is that of DEP domain-containing protein 1A (depdc1a) from Danio rerio (Zebrafish).